The following is a 309-amino-acid chain: Protein FdhE (309 aa).

It belongs to the FdhE family.

Its subcellular location is the cytoplasm. Its function is as follows. Necessary for formate dehydrogenase activity. This Escherichia coli (strain SMS-3-5 / SECEC) protein is Protein FdhE.